We begin with the raw amino-acid sequence, 217 residues long: Octanoyltransferase (217 aa).

One can recognise a BPL/LPL catalytic domain in the interval lysine 31–glutamate 206. Residues arginine 70 to histidine 77, serine 137 to glycine 139, and glycine 150 to alanine 152 contribute to the substrate site. Cysteine 168 functions as the Acyl-thioester intermediate in the catalytic mechanism.

The protein belongs to the LipB family.

Its subcellular location is the cytoplasm. The catalysed reaction is octanoyl-[ACP] + L-lysyl-[protein] = N(6)-octanoyl-L-lysyl-[protein] + holo-[ACP] + H(+). It participates in protein modification; protein lipoylation via endogenous pathway; protein N(6)-(lipoyl)lysine from octanoyl-[acyl-carrier-protein]: step 1/2. Its function is as follows. Catalyzes the transfer of endogenously produced octanoic acid from octanoyl-acyl-carrier-protein onto the lipoyl domains of lipoate-dependent enzymes. Lipoyl-ACP can also act as a substrate although octanoyl-ACP is likely to be the physiological substrate. The protein is Octanoyltransferase of Pseudomonas aeruginosa (strain UCBPP-PA14).